A 348-amino-acid chain; its full sequence is Holliday junction branch migration complex subunit RuvB (348 aa).

Residues 1–183 (MTDPSRLVTP…FGIPVRLNFY (183 aa)) form a large ATPase domain (RuvB-L) region. ATP-binding positions include Leu-22, Arg-23, Gly-64, Lys-67, Thr-68, Thr-69, 130 to 132 (EDF), Arg-173, Tyr-183, and Arg-220. Thr-68 lines the Mg(2+) pocket. Positions 184–254 (TIEELESIVS…IADHALGALE (71 aa)) are small ATPAse domain (RuvB-S). The segment at 257 to 348 (AAGLDAMDRR…FGLFGGEEEA (92 aa)) is head domain (RuvB-H). DNA contacts are provided by Arg-293, Arg-312, and Arg-317.

This sequence belongs to the RuvB family. Homohexamer. Forms an RuvA(8)-RuvB(12)-Holliday junction (HJ) complex. HJ DNA is sandwiched between 2 RuvA tetramers; dsDNA enters through RuvA and exits via RuvB. An RuvB hexamer assembles on each DNA strand where it exits the tetramer. Each RuvB hexamer is contacted by two RuvA subunits (via domain III) on 2 adjacent RuvB subunits; this complex drives branch migration. In the full resolvosome a probable DNA-RuvA(4)-RuvB(12)-RuvC(2) complex forms which resolves the HJ.

Its subcellular location is the cytoplasm. The catalysed reaction is ATP + H2O = ADP + phosphate + H(+). In terms of biological role, the RuvA-RuvB-RuvC complex processes Holliday junction (HJ) DNA during genetic recombination and DNA repair, while the RuvA-RuvB complex plays an important role in the rescue of blocked DNA replication forks via replication fork reversal (RFR). RuvA specifically binds to HJ cruciform DNA, conferring on it an open structure. The RuvB hexamer acts as an ATP-dependent pump, pulling dsDNA into and through the RuvAB complex. RuvB forms 2 homohexamers on either side of HJ DNA bound by 1 or 2 RuvA tetramers; 4 subunits per hexamer contact DNA at a time. Coordinated motions by a converter formed by DNA-disengaged RuvB subunits stimulates ATP hydrolysis and nucleotide exchange. Immobilization of the converter enables RuvB to convert the ATP-contained energy into a lever motion, pulling 2 nucleotides of DNA out of the RuvA tetramer per ATP hydrolyzed, thus driving DNA branch migration. The RuvB motors rotate together with the DNA substrate, which together with the progressing nucleotide cycle form the mechanistic basis for DNA recombination by continuous HJ branch migration. Branch migration allows RuvC to scan DNA until it finds its consensus sequence, where it cleaves and resolves cruciform DNA. This Rhodopseudomonas palustris (strain HaA2) protein is Holliday junction branch migration complex subunit RuvB.